The sequence spans 104 residues: ESAT-6-like protein (104 aa).

A coiled-coil region spans residues 12–43 (MAQAAQDIEQSANAIRGMQNQLASAKDQLRSH).

It belongs to the WXG100 family. CFP-10 subfamily. In terms of assembly, in isolation forms a homodimer. Forms a tight 1:1 complex with EsxA. Forms a complex with EsxA and EccC, probably wholly mediated by EsxB; binds in a pocket in the third FtsK (ATPase) domain of EccC (residues 1163-1208).

The protein resides in the secreted. May help regulate assembly and function of the type VII secretion system (T7SS). Binds to EccC and induces its multimerization. May serve as a chaperone for EsxA. This is ESAT-6-like protein from Thermomonospora curvata (strain ATCC 19995 / DSM 43183 / JCM 3096 / KCTC 9072 / NBRC 15933 / NCIMB 10081 / Henssen B9).